The chain runs to 62 residues: Photosystem II reaction center protein Z (62 aa).

The next 2 membrane-spanning stretches (helical) occupy residues 8–28 and 41–61; these read AVFA…VVFA and FSGT…NSLI.

The protein belongs to the PsbZ family. In terms of assembly, PSII is composed of 1 copy each of membrane proteins PsbA, PsbB, PsbC, PsbD, PsbE, PsbF, PsbH, PsbI, PsbJ, PsbK, PsbL, PsbM, PsbT, PsbY, PsbZ, Psb30/Ycf12, at least 3 peripheral proteins of the oxygen-evolving complex and a large number of cofactors. It forms dimeric complexes.

The protein resides in the plastid. The protein localises to the chloroplast thylakoid membrane. Functionally, may control the interaction of photosystem II (PSII) cores with the light-harvesting antenna, regulates electron flow through the 2 photosystem reaction centers. PSII is a light-driven water plastoquinone oxidoreductase, using light energy to abstract electrons from H(2)O, generating a proton gradient subsequently used for ATP formation. This Pisum sativum (Garden pea) protein is Photosystem II reaction center protein Z.